A 352-amino-acid polypeptide reads, in one-letter code: Biotin synthase (352 aa).

Positions 44-262 (NRVQVSTLLS…LAVARIMMPK (219 aa)) constitute a Radical SAM core domain. [4Fe-4S] cluster is bound by residues Cys-59, Cys-63, and Cys-66. [2Fe-2S] cluster contacts are provided by Cys-103, Cys-134, Cys-194, and Arg-266.

Belongs to the radical SAM superfamily. Biotin synthase family. As to quaternary structure, homodimer. The cofactor is [4Fe-4S] cluster. Requires [2Fe-2S] cluster as cofactor.

It catalyses the reaction (4R,5S)-dethiobiotin + (sulfur carrier)-SH + 2 reduced [2Fe-2S]-[ferredoxin] + 2 S-adenosyl-L-methionine = (sulfur carrier)-H + biotin + 2 5'-deoxyadenosine + 2 L-methionine + 2 oxidized [2Fe-2S]-[ferredoxin]. It participates in cofactor biosynthesis; biotin biosynthesis; biotin from 7,8-diaminononanoate: step 2/2. Catalyzes the conversion of dethiobiotin (DTB) to biotin by the insertion of a sulfur atom into dethiobiotin via a radical-based mechanism. This chain is Biotin synthase, found in Ectopseudomonas mendocina (strain ymp) (Pseudomonas mendocina).